The sequence spans 493 residues: Protein nucleotidyltransferase YdiU (493 aa).

G94, G96, R97, K117, D129, G130, R180, and R187 together coordinate ATP. The active-site Proton acceptor is the D256. The Mg(2+) site is built by N257 and D266. D266 contacts ATP.

It belongs to the SELO family. Mg(2+) serves as cofactor. Requires Mn(2+) as cofactor.

The enzyme catalyses L-seryl-[protein] + ATP = 3-O-(5'-adenylyl)-L-seryl-[protein] + diphosphate. The catalysed reaction is L-threonyl-[protein] + ATP = 3-O-(5'-adenylyl)-L-threonyl-[protein] + diphosphate. It carries out the reaction L-tyrosyl-[protein] + ATP = O-(5'-adenylyl)-L-tyrosyl-[protein] + diphosphate. It catalyses the reaction L-histidyl-[protein] + UTP = N(tele)-(5'-uridylyl)-L-histidyl-[protein] + diphosphate. The enzyme catalyses L-seryl-[protein] + UTP = O-(5'-uridylyl)-L-seryl-[protein] + diphosphate. The catalysed reaction is L-tyrosyl-[protein] + UTP = O-(5'-uridylyl)-L-tyrosyl-[protein] + diphosphate. Functionally, nucleotidyltransferase involved in the post-translational modification of proteins. It can catalyze the addition of adenosine monophosphate (AMP) or uridine monophosphate (UMP) to a protein, resulting in modifications known as AMPylation and UMPylation. The protein is Protein nucleotidyltransferase YdiU of Hahella chejuensis (strain KCTC 2396).